A 326-amino-acid chain; its full sequence is L-threo-3-hydroxyaspartate ammonia-lyase (326 aa).

At lysine 53 the chain carries N6-(pyridoxal phosphate)lysine. Residues asparagine 80, 179–183, and serine 304 contribute to the pyridoxal 5'-phosphate site; that span reads GGGGL.

The protein belongs to the serine/threonine dehydratase family. Monomer. Pyridoxal 5'-phosphate serves as cofactor. It depends on Mn(2+) as a cofactor. Requires Mg(2+) as cofactor. The cofactor is Ca(2+).

It catalyses the reaction (3S)-3-hydroxy-L-aspartate = oxaloacetate + NH4(+). Its activity is regulated as follows. Is strongly inhibited by hydroxylamine and EDTA in vitro. Catalyzes the deamination of L-threo-3-hydroxyaspartate to oxaloacetate and ammonia. Shows a high specificity towards L-threo-3-hydroxyaspartate as other 3-hydroxyaminoacids, i.e. D,L-erythro- and D-threo-3-hydroxyaspartate, D-threonine, L-threonine, D,L-allothreonine, D-serine, and L-serine, are not substrates for this enzyme. Exhibits no detectable serine racemase activity. Is responsible for the 3-hydroxyaspartate resistance of S.cerevisiae, and thus may be involved in the detoxification of naturally occurring 3-hydroxyaspartate. In Saccharomyces cerevisiae (strain ATCC 204508 / S288c) (Baker's yeast), this protein is L-threo-3-hydroxyaspartate ammonia-lyase (SRY1).